The chain runs to 570 residues: Interleukin-1 receptor accessory protein (570 aa).

A signal peptide spans 1 to 20; it reads MGLPWCLMSLFFCGILQSHA. Ig-like C2-type domains lie at 21–128, 141–230, and 243–348; these read SERC…VAFP, PMRL…RTMT, and PHIY…AKVK. Topologically, residues 21-367 are extracellular; sequence SERCDDWGLD…VELACGFGAT (347 aa). Disulfide bonds link Cys-24/Cys-122, Cys-47/Cys-114, Cys-137/Cys-181, Cys-160/Cys-212, and Cys-266/Cys-332. An N-linked (GlcNAc...) asparagine glycan is attached at Asn-57. The tract at residues 69–85 is essential for interaction with PTPRD; the sequence is IWYWTRQDRDLEEPINF. 6 N-linked (GlcNAc...) asparagine glycosylation sites follow: Asn-107, Asn-111, Asn-118, Asn-157, Asn-196, and Asn-209. Residues 368-388 form a helical membrane-spanning segment; it reads VFLVVVLIVVYHVYWLEMVLF. Residues 389–570 are Cytoplasmic-facing; that stretch reads YRAHFGTDET…GLSYSSLKNV (182 aa). Residues 403 to 546 form the TIR domain; that stretch reads KEYDIYVSYA…RFWKQLQVAM (144 aa). The active site involves Glu-482. Residues 550–570 form a disordered region; sequence KSPRWSSSDKQGLSYSSLKNV. The span at 553-570 shows a compositional bias: polar residues; the sequence is RWSSSDKQGLSYSSLKNV. Residue Ser-557 is modified to Phosphoserine.

The protein belongs to the interleukin-1 receptor family. The interleukin-36 receptor complex is a heterodimer of IL1RL2 and IL1RAP; the association is inhibited by IL36RN. The interleukin-1 receptor complex is a heterodimer of IL1R1 and IL1RAP. Associates with IL1R2 to form a non-signaling interleukin-1 receptor complex. Interacts with IL-33-bound IL1RL1 to form the minimal interleukin-33 signaling complex with a 1:1:1 stoichiometry. Interacts with KIT (independently of stimulation with KITLG/SCF). A mast cell-specific KITLG/SCF-induced interleukin-33 signaling complex contains IL1RL1, IL1RAP, KIT and MYD88. Interacts (via the first immunoglobilin domain) with PTPRD (via the third immunoglobilin domain); induces pre- and postsynaptic differentiation of neurons. In terms of tissue distribution, highly expressed in hypothalamus, in the dentate gyrus of hippocampus, cerebral cortex, cerebellum, liver and lung.

The protein localises to the membrane. It carries out the reaction NAD(+) + H2O = ADP-D-ribose + nicotinamide + H(+). Coreceptor for IL1RL2 in the IL-36 signaling system. Coreceptor with IL1R1 in the IL-1 signaling system. Associates with IL1R1 bound to IL1B to form the high affinity interleukin-1 receptor complex which mediates interleukin-1-dependent activation of NF-kappa-B and other pathways. Signaling involves the recruitment of adapter molecules such as TOLLIP, MYD88, and IRAK1 or IRAK2 via the respective TIR domains of the receptor/coreceptor subunits. Recruits TOLLIP to the signaling complex. Does not bind to interleukin-1 alone; binding of IL1RN to IL1R1, prevents its association with IL1R1 to form a signaling complex. The cellular response is modulated through a non-signaling association with the membrane IL1R2 decoy receptor. Coreceptor for IL1RL1 in the IL-33 signaling system. Can bidirectionally induce pre- and postsynaptic differentiation of neurons by trans-synaptically binding to PTPRD. May play a role in IL1B-mediated costimulation of IFNG production from T-helper 1 (Th1) cells. This chain is Interleukin-1 receptor accessory protein (Il1rap), found in Rattus norvegicus (Rat).